The following is a 166-amino-acid chain: METDLAAIVHKKRALLNAAFKQQDKKIAKYFAKPCENDAEKMLMLAAEIHGQVEQLEALLSVARASDADKREFARDCSDLDIDAQDLQRMCASNEPTYFAAKYDAATVLAAHPAAYDGFLGHSERFVDAMRSLNAPNADADYLAQRKCAAIRHLCALEYLVGLHTK.

This is an uncharacterized protein from Orgyia pseudotsugata (Douglas-fir tussock moth).